A 244-amino-acid polypeptide reads, in one-letter code: Small ribosomal subunit protein uS3 (244 aa).

A KH type-2 domain is found at 39–110 (IRNFIQKKYS…QVRINVVEVE (72 aa)). The disordered stretch occupies residues 221-244 (GAIPRRKGSRKPQQFEDRSSNENS). Residues 233-244 (QQFEDRSSNENS) show a composition bias toward basic and acidic residues.

It belongs to the universal ribosomal protein uS3 family. Part of the 30S ribosomal subunit. Forms a tight complex with proteins S10 and S14.

Binds the lower part of the 30S subunit head. Binds mRNA in the 70S ribosome, positioning it for translation. The chain is Small ribosomal subunit protein uS3 from Prochlorococcus marinus (strain MIT 9515).